The primary structure comprises 86 residues: Colicin-E9 immunity protein (86 aa).

The protein belongs to the colicins ColE2/ColE8/ColE9 and pyocins S1/S2 family.

Its function is as follows. This protein is able to protect a cell, which harbors the plasmid ColE9 encoding colicin E9, against colicin E9, it binds specifically to the DNase-type colicin and inhibits its bactericidal activity. The protein is Colicin-E9 immunity protein (imm) of Escherichia coli.